The chain runs to 866 residues: Coiled-coil domain-containing protein 178 (866 aa).

The tract at residues 1 to 21 is disordered; sequence MPENEKEPAQPTTNEDALDTG. Coiled coils occupy residues 157–266, 292–403, 439–480, 514–539, 570–631, and 665–705; these read ELKK…DYMA, EVME…DQYC, KDLT…EEEV, KTEE…LKKL, RRQV…LLKK, and EKCI…REHV.

The chain is Coiled-coil domain-containing protein 178 (Ccdc178) from Mus musculus (Mouse).